Here is a 293-residue protein sequence, read N- to C-terminus: Elongation factor P--(R)-beta-lysine ligase homolog (293 aa).

ATP is bound by residues 86–88, 223–224, and G272; these read RNN and EL.

It belongs to the class-II aminoacyl-tRNA synthetase family. EpmA subfamily. Homodimer.

The polypeptide is Elongation factor P--(R)-beta-lysine ligase homolog (genX) (Aquifex aeolicus (strain VF5)).